Consider the following 932-residue polypeptide: DNA mismatch repair protein MutS (932 aa).

Residue 615–622 (GPNMAGKS) coordinates ATP.

It belongs to the DNA mismatch repair MutS family.

This protein is involved in the repair of mismatches in DNA. It is possible that it carries out the mismatch recognition step. This protein has a weak ATPase activity. The polypeptide is DNA mismatch repair protein MutS (Clostridium botulinum (strain Okra / Type B1)).